The chain runs to 168 residues: Ribosome maturation factor RimM (168 aa).

Residues 95 to 166 form the PRC barrel domain; it reads EHEFYYSDII…RIQITPMEGL (72 aa).

This sequence belongs to the RimM family. In terms of assembly, binds ribosomal protein uS19.

Its subcellular location is the cytoplasm. Its function is as follows. An accessory protein needed during the final step in the assembly of 30S ribosomal subunit, possibly for assembly of the head region. Essential for efficient processing of 16S rRNA. May be needed both before and after RbfA during the maturation of 16S rRNA. It has affinity for free ribosomal 30S subunits but not for 70S ribosomes. The sequence is that of Ribosome maturation factor RimM from Staphylococcus saprophyticus subsp. saprophyticus (strain ATCC 15305 / DSM 20229 / NCIMB 8711 / NCTC 7292 / S-41).